A 339-amino-acid polypeptide reads, in one-letter code: Olfactory receptor 7E24 (339 aa).

Residues 1-43 (MSYFPILFFFFLKRCPSYTEPQNLTGVSEFLLLGLSEDPELQP) are Extracellular-facing. N-linked (GlcNAc...) asparagine glycosylation occurs at N23. A helical membrane pass occupies residues 44 to 64 (VLAGLFLSMYLVTVLGNLLII). The Cytoplasmic segment spans residues 65–72 (LAVSSDSH). A helical membrane pass occupies residues 73–93 (LHTPMYFFLSNLSLADIGFTS). Residues 94–117 (TTVPKMIVDMQTHSRVISYEGCLT) lie on the Extracellular side of the membrane. C115 and C207 form a disulfide bridge. The helical transmembrane segment at 118–138 (QMSFFVLFACMDDMLLSVMAY) threads the bilayer. Residues 139-157 (DRFVAICHPLHYRIIMNPR) lie on the Cytoplasmic side of the membrane. A helical transmembrane segment spans residues 158–178 (LCGFLILLSFFISLLDSQLHN). Topologically, residues 179–215 (LIMLQLTCFKDVDISNFFCDPSQLLHLRCSDTFINEM) are extracellular. Residues 216-235 (VIYFMGAIFGCLPISGILFS) form a helical membrane-spanning segment. The Cytoplasmic portion of the chain corresponds to 236-255 (YYKIVSPILRVPTSDGKYKA). The helical transmembrane segment at 256-276 (FSTCGSHLAVVCLFYGTGLVG) threads the bilayer. The Extracellular segment spans residues 277 to 289 (YLSSAVLPSPRKS). A helical transmembrane segment spans residues 290–310 (MVASVMYTVVTPMLNPFIYSL). The Cytoplasmic portion of the chain corresponds to 311 to 339 (RNKDIQSALCRLHGRIIKSHHLHPFCYMG).

It belongs to the G-protein coupled receptor 1 family.

It is found in the cell membrane. Its function is as follows. Odorant receptor. In Homo sapiens (Human), this protein is Olfactory receptor 7E24 (OR7E24).